The sequence spans 391 residues: Mannonate dehydratase (391 aa).

Residues 334 to 359 (ERRRERDGGPRLPLRPDHGHHLLDDL) form a disordered region.

This sequence belongs to the mannonate dehydratase family. The cofactor is Fe(2+). Requires Mn(2+) as cofactor.

It carries out the reaction D-mannonate = 2-dehydro-3-deoxy-D-gluconate + H2O. It functions in the pathway carbohydrate metabolism; pentose and glucuronate interconversion. Catalyzes the dehydration of D-mannonate. This is Mannonate dehydratase from Chromohalobacter salexigens (strain ATCC BAA-138 / DSM 3043 / CIP 106854 / NCIMB 13768 / 1H11).